Consider the following 353-residue polypeptide: Photosystem II D2 protein (353 aa).

T2 carries the post-translational modification N-acetylthreonine. At T2 the chain carries Phosphothreonine. Residues 41–61 (CAYFAVGGWFTGTTFVTSWYT) traverse the membrane as a helical segment. Position 118 (H118) interacts with chlorophyll a. A helical transmembrane segment spans residues 125-141 (GFMLRQFELARSVQLRP). Pheophytin a contacts are provided by Q130 and N143. The helical transmembrane segment at 153–166 (VFVSVFLIYPLGQS) threads the bilayer. H198 is a binding site for chlorophyll a. The helical transmembrane segment at 208 to 228 (AALLCAIHGATVENTLFEDGD) threads the bilayer. A plastoquinone is bound by residues H215 and F262. H215 is a Fe cation binding site. H269 contacts Fe cation. A helical membrane pass occupies residues 279 to 295 (GLWMSALGVVGLALNLR).

This sequence belongs to the reaction center PufL/M/PsbA/D family. In terms of assembly, PSII is composed of 1 copy each of membrane proteins PsbA, PsbB, PsbC, PsbD, PsbE, PsbF, PsbH, PsbI, PsbJ, PsbK, PsbL, PsbM, PsbT, PsbX, PsbY, PsbZ, Psb30/Ycf12, at least 3 peripheral proteins of the oxygen-evolving complex and a large number of cofactors. It forms dimeric complexes. The cofactor is The D1/D2 heterodimer binds P680, chlorophylls that are the primary electron donor of PSII, and subsequent electron acceptors. It shares a non-heme iron and each subunit binds pheophytin, quinone, additional chlorophylls, carotenoids and lipids. There is also a Cl(-1) ion associated with D1 and D2, which is required for oxygen evolution. The PSII complex binds additional chlorophylls, carotenoids and specific lipids..

It is found in the plastid. It localises to the chloroplast thylakoid membrane. The enzyme catalyses 2 a plastoquinone + 4 hnu + 2 H2O = 2 a plastoquinol + O2. Photosystem II (PSII) is a light-driven water:plastoquinone oxidoreductase that uses light energy to abstract electrons from H(2)O, generating O(2) and a proton gradient subsequently used for ATP formation. It consists of a core antenna complex that captures photons, and an electron transfer chain that converts photonic excitation into a charge separation. The D1/D2 (PsbA/PsbD) reaction center heterodimer binds P680, the primary electron donor of PSII as well as several subsequent electron acceptors. D2 is needed for assembly of a stable PSII complex. The polypeptide is Photosystem II D2 protein (Lactuca sativa (Garden lettuce)).